Here is a 287-residue protein sequence, read N- to C-terminus: Undecaprenyl-diphosphatase (287 aa).

A run of 7 helical transmembrane segments spans residues 6 to 26 (LYLIKAFFLGIIEGLTEFIPV), 45 to 65 (SGKVFEVVIQFGSILAVMWIF), 85 to 105 (AFTRNLLLAFLPAAVVGAIFI), 111 to 131 (VFYHPGVVAVTLVLGGLIMLW), 204 to 224 (ATEFSFFLAMPTMLGAATYDL), 238 to 258 (AIAVGFAAAFISALVVVRAVL), and 265 to 285 (TYRGFAWYRIALGIVVAAWLM).

Belongs to the UppP family.

The protein localises to the cell inner membrane. The catalysed reaction is di-trans,octa-cis-undecaprenyl diphosphate + H2O = di-trans,octa-cis-undecaprenyl phosphate + phosphate + H(+). In terms of biological role, catalyzes the dephosphorylation of undecaprenyl diphosphate (UPP). Confers resistance to bacitracin. The polypeptide is Undecaprenyl-diphosphatase (Bordetella petrii (strain ATCC BAA-461 / DSM 12804 / CCUG 43448)).